A 344-amino-acid chain; its full sequence is Melanocyte-stimulating hormone receptor (344 aa).

The Extracellular segment spans residues 1–37; the sequence is MPMQGAQRKLLGSLNSTPTATSNLGLAANHTGAPCLE. N29 is a glycosylation site (N-linked (GlcNAc...) asparagine). A helical membrane pass occupies residues 38–63; that stretch reads VSIPDGLFLSLGLVSLVENVLVVAAI. The Cytoplasmic segment spans residues 64–72; it reads AKNRNLHSS. Residues 73 to 93 form a helical membrane-spanning segment; that stretch reads MYCFICCLALSDLLVSGSNML. The Extracellular portion of the chain corresponds to 94-118; the sequence is ETAIILLLEAGTLATRASVVQQLHN. The helical transmembrane segment at 119–140 threads the bilayer; sequence TIDVLTCSSMLCSLCFLGAIAV. The Cytoplasmic portion of the chain corresponds to 141-163; the sequence is DRYISIFYALRYHSIMTLPRAQR. A helical membrane pass occupies residues 164 to 183; it reads AIAAIWVTSVLSSTLFITYY. The Extracellular portion of the chain corresponds to 184–191; sequence DHAAVLLC. A helical transmembrane segment spans residues 192 to 211; the sequence is LVVFFLAMLVLMAVLYVHML. The Cytoplasmic portion of the chain corresponds to 212–240; the sequence is ARACQHAQGIIRLHNRQLPAHKGFGLRGA. The chain crosses the membrane as a helical span at residues 241–266; sequence ATLTILLGIFFLCWGPFFLHLTLVVF. Over 267–279 the chain is Extracellular; the sequence is CPQHLTCNCIFKN. Residues 280-300 traverse the membrane as a helical segment; that stretch reads FKVFLTLIICNTIIDPLIYAF. At 301–344 the chain is on the cytoplasmic side; the sequence is RSQELRRTLKEVLLCSWWPGCGAEGGGDSVWPGSCVTLRGPLPP. C315 carries S-palmitoyl cysteine lipidation.

It belongs to the G-protein coupled receptor 1 family. In terms of assembly, interacts with MGRN1, but does not undergo MGRN1-mediated ubiquitination; this interaction competes with GNAS-binding and thus inhibits agonist-induced cAMP production. Interacts with OPN3; the interaction results in a decrease in MC1R-mediated cAMP signaling and ultimately a decrease in melanin production in melanocytes.

The protein localises to the cell membrane. In terms of biological role, receptor for MSH (alpha, beta and gamma) and ACTH. The activity of this receptor is mediated by G proteins which activate adenylate cyclase. Mediates melanogenesis, the production of eumelanin (black/brown) and phaeomelanin (red/yellow), via regulation of cAMP signaling in melanocytes. In Mico argentatus (Silvery marmoset), this protein is Melanocyte-stimulating hormone receptor (MC1R).